Consider the following 827-residue polypeptide: Lon protease 2 (827 aa).

Residues 1–22 (MSDEKKKGSAASAMPTAMAPPG) are disordered. Over residues 9–21 (SAASAMPTAMAPP) the composition is skewed to low complexity. One can recognise a Lon N-terminal domain in the interval 33–227 (LPILPLRNSV…LVLELLNRKR (195 aa)). 379-386 (GPPGVGKT) is a binding site for ATP. The region spanning 615–796 (TEVPGVATGL…DDVLKAALET (182 aa)) is the Lon proteolytic domain. Catalysis depends on residues S702 and K745. The interval 799 to 827 (VGVAGTPGGEPGKEAPLPKPAESAPEVRA) is disordered.

Belongs to the peptidase S16 family. As to quaternary structure, homohexamer. Organized in a ring with a central cavity.

It localises to the cytoplasm. The enzyme catalyses Hydrolysis of proteins in presence of ATP.. Its function is as follows. ATP-dependent serine protease that mediates the selective degradation of mutant and abnormal proteins as well as certain short-lived regulatory proteins. Required for cellular homeostasis and for survival from DNA damage and developmental changes induced by stress. Degrades polypeptides processively to yield small peptide fragments that are 5 to 10 amino acids long. Binds to DNA in a double-stranded, site-specific manner. This is Lon protease 2 from Myxococcus xanthus.